The chain runs to 188 residues: dTTP/UTP pyrophosphatase (188 aa).

Aspartate 67 acts as the Proton acceptor in catalysis.

Belongs to the Maf family. YhdE subfamily. Requires a divalent metal cation as cofactor.

Its subcellular location is the cytoplasm. It catalyses the reaction dTTP + H2O = dTMP + diphosphate + H(+). The catalysed reaction is UTP + H2O = UMP + diphosphate + H(+). Functionally, nucleoside triphosphate pyrophosphatase that hydrolyzes dTTP and UTP. May have a dual role in cell division arrest and in preventing the incorporation of modified nucleotides into cellular nucleic acids. In Roseobacter denitrificans (strain ATCC 33942 / OCh 114) (Erythrobacter sp. (strain OCh 114)), this protein is dTTP/UTP pyrophosphatase.